Here is a 204-residue protein sequence, read N- to C-terminus: RNA-free ribonuclease P (204 aa).

Belongs to the HARP family.

The catalysed reaction is Endonucleolytic cleavage of RNA, removing 5'-extranucleotides from tRNA precursor.. Its function is as follows. RNA-free RNase P that catalyzes the removal of the 5'-leader sequence from pre-tRNA to produce the mature 5'-terminus. This chain is RNA-free ribonuclease P, found in Pyrococcus horikoshii (strain ATCC 700860 / DSM 12428 / JCM 9974 / NBRC 100139 / OT-3).